The following is a 461-amino-acid chain: MRVLIKNGIVVNADGQAKQDLLIESGIVRQLGTDISPQLPCEEIDASGCYVFPGGVDVHTHFNIDVGIARSCDDFFTGTRAAACGGTTTIIDHMGFGPNGCRLRHQLEVYRGYAAHKAVIDYSFHGVIQHINHAILDEIPMMVEEGLSSFKLYLTYQYKLNDDEVLQALRRLHESGALTTVHPENDAAIASKRAEFIAAGLTAPRYHALSRPLECEAEAIARMINLAQIAGNAPLYIVHLSNGLGLDYLRLARANHQPVWVETCPQYLLLDERSYDTEDGMKFILSPPLRNVREQDKLWCGISDGAIDVVATDHCTFSMAQRLQISKGDFSRCPNGLPGVENRMQLLFSSGVMTGRISPERFVELTSAMPARLFGLWPQKGLLAPGSDGDVVIIDPRQSQQIQHRHLHDNADYSPWEGFTCQGAIVRTLSRGEMIFCDGTFTGKAGRGRFLRRKPFVPPVL.

The a divalent metal cation site is built by H59, H61, and K151. An N6-carboxylysine modification is found at K151. Y156 contacts substrate. The a divalent metal cation site is built by H182 and H239. S286 is a substrate binding site. Residue D313 coordinates a divalent metal cation. N335 provides a ligand contact to substrate.

This sequence belongs to the metallo-dependent hydrolases superfamily. Hydantoinase/dihydropyrimidinase family. As to quaternary structure, homotetramer. It depends on a divalent metal cation as a cofactor. Post-translationally, carboxylation allows a single lysine to coordinate two divalent metal cations.

It carries out the reaction D-5-phenylhydantoin + H2O = N-carbamoyl-D-phenylglycine + H(+). Functionally, catalyzes the stereospecific hydrolysis of the cyclic amide bond of D-hydantoin derivatives with an aromatic side chains at the 5'-position. Has no activity on dihydropyrimidines. The physiological function is unknown. This is D-phenylhydantoinase from Escherichia coli O127:H6 (strain E2348/69 / EPEC).